The chain runs to 125 residues: Phosphoribosyl-AMP cyclohydrolase (125 aa).

Position 74 (D74) interacts with Mg(2+). A Zn(2+)-binding site is contributed by C75. Residues D76 and D78 each contribute to the Mg(2+) site. Zn(2+) is bound by residues C92 and C99.

The protein belongs to the PRA-CH family. As to quaternary structure, homodimer. It depends on Mg(2+) as a cofactor. Requires Zn(2+) as cofactor.

The protein localises to the cytoplasm. The catalysed reaction is 1-(5-phospho-beta-D-ribosyl)-5'-AMP + H2O = 1-(5-phospho-beta-D-ribosyl)-5-[(5-phospho-beta-D-ribosylamino)methylideneamino]imidazole-4-carboxamide. The protein operates within amino-acid biosynthesis; L-histidine biosynthesis; L-histidine from 5-phospho-alpha-D-ribose 1-diphosphate: step 3/9. Its function is as follows. Catalyzes the hydrolysis of the adenine ring of phosphoribosyl-AMP. The sequence is that of Phosphoribosyl-AMP cyclohydrolase from Desulfatibacillum aliphaticivorans.